The chain runs to 563 residues: MNNKEIVAKALHDVLNEELTMDQIEQLLENPKSVDHGDVAFPAFSLAKIYRKAPQQIAAELAEKIDGTNFEKIEVVGPYLNFFMNKEAVSQAVIGEVVKEKNNYGNSTFGNNGNVPIDMSSPNIAKPISMGHLRSTVIGNSIAFILEKIGYQPIRINHLGDWGTQFGKLIVAYKKWGSEEAVRQQPINELLRLYVQFHEEAEEKPELEDEARAWFKKLEEGDQEANELWKWFRSESLKEFDKIYSMLEVEFDSYNGEAFYNDKMDEIVTLLEEKHLLTENQGAEIVDLTEYNLNPALIRKSDGATLYITRDLAAALYRKRTYDFAKSLYVVGNEQSNHFKQLKAVLKELGFDWSDDMEHIPFGLITQGGKKLSTRKGKIVLLEEVLNEAVTLAGNQINEKNPDLANREEVAKQVGVGAVIFHDLKNDRLNNFDFVLDEVVRFEGETGPYVQYTHARAMSILRKANFTPDATQRYALNDKDSWEVVKLLQKFPETVMQAAEKYEPSVIAKHSIHLAQAFNKYYAHVRILDEDAQKEARLALVYAVATVLKEDLRLLGLHAPEEM.

The 'HIGH' region motif lies at 122–132; sequence PNIAKPISMGH.

It belongs to the class-I aminoacyl-tRNA synthetase family. Monomer.

Its subcellular location is the cytoplasm. It carries out the reaction tRNA(Arg) + L-arginine + ATP = L-arginyl-tRNA(Arg) + AMP + diphosphate. The sequence is that of Arginine--tRNA ligase from Enterococcus faecalis (strain ATCC 700802 / V583).